The following is a 467-amino-acid chain: 3-isopropylmalate dehydratase large subunit (467 aa).

The [4Fe-4S] cluster site is built by cysteine 348, cysteine 409, and cysteine 412. A disordered region spans residues 423–448 (NERSISTSNRNFEGRQGKGSRTHLAS).

This sequence belongs to the aconitase/IPM isomerase family. LeuC type 1 subfamily. Heterodimer of LeuC and LeuD. It depends on [4Fe-4S] cluster as a cofactor.

The catalysed reaction is (2R,3S)-3-isopropylmalate = (2S)-2-isopropylmalate. Its pathway is amino-acid biosynthesis; L-leucine biosynthesis; L-leucine from 3-methyl-2-oxobutanoate: step 2/4. Functionally, catalyzes the isomerization between 2-isopropylmalate and 3-isopropylmalate, via the formation of 2-isopropylmaleate. The protein is 3-isopropylmalate dehydratase large subunit of Bifidobacterium longum (strain DJO10A).